Reading from the N-terminus, the 201-residue chain is Small ribosomal subunit protein uS4 (201 aa).

Residues 93–155 (CRLDNIVYRM…SKSLSMFEVN (63 aa)) enclose the S4 RNA-binding domain.

This sequence belongs to the universal ribosomal protein uS4 family. Part of the 30S ribosomal subunit. Contacts protein S5. The interaction surface between S4 and S5 is involved in control of translational fidelity.

Functionally, one of the primary rRNA binding proteins, it binds directly to 16S rRNA where it nucleates assembly of the body of the 30S subunit. Its function is as follows. With S5 and S12 plays an important role in translational accuracy. The polypeptide is Small ribosomal subunit protein uS4 (Elusimicrobium minutum (strain Pei191)).